A 255-amino-acid chain; its full sequence is Imidazole glycerol phosphate synthase subunit HisF (255 aa).

Active-site residues include Asp11 and Asp130.

The protein belongs to the HisA/HisF family. As to quaternary structure, heterodimer of HisH and HisF.

Its subcellular location is the cytoplasm. The enzyme catalyses 5-[(5-phospho-1-deoxy-D-ribulos-1-ylimino)methylamino]-1-(5-phospho-beta-D-ribosyl)imidazole-4-carboxamide + L-glutamine = D-erythro-1-(imidazol-4-yl)glycerol 3-phosphate + 5-amino-1-(5-phospho-beta-D-ribosyl)imidazole-4-carboxamide + L-glutamate + H(+). It participates in amino-acid biosynthesis; L-histidine biosynthesis; L-histidine from 5-phospho-alpha-D-ribose 1-diphosphate: step 5/9. Its function is as follows. IGPS catalyzes the conversion of PRFAR and glutamine to IGP, AICAR and glutamate. The HisF subunit catalyzes the cyclization activity that produces IGP and AICAR from PRFAR using the ammonia provided by the HisH subunit. This chain is Imidazole glycerol phosphate synthase subunit HisF, found in Rhodopseudomonas palustris (strain HaA2).